Consider the following 93-residue polypeptide: Alpha-defensin 1 (93 aa).

An N-terminal signal peptide occupies residues 1 to 19 (MKKLVLLFALVLLGFQVQA). The propeptide occupies 20 to 58 (DSIQNTDEETKTEEQPGEEDQAVSVSFGDPEGTSLQEES). Residues 24–54 (NTDEETKTEEQPGEEDQAVSVSFGDPEGTSL) are disordered. 3 disulfides stabilise this stretch: Cys-64–Cys-92, Cys-66–Cys-81, and Cys-71–Cys-91.

The protein belongs to the alpha-defensin family. As to expression, paneth cells of the small bowel.

The protein localises to the secreted. In terms of biological role, probably contributes to the antimicrobial barrier function of the small bowel mucosa. Has antibacterial activity against attenuated mutants of S.typhimurium. The protein is Alpha-defensin 1 (Defa1) of Mus musculus (Mouse).